A 170-amino-acid polypeptide reads, in one-letter code: Large ribosomal subunit protein uL10 (170 aa).

It belongs to the universal ribosomal protein uL10 family. In terms of assembly, part of the ribosomal stalk of the 50S ribosomal subunit. The N-terminus interacts with L11 and the large rRNA to form the base of the stalk. The C-terminus forms an elongated spine to which L12 dimers bind in a sequential fashion forming a multimeric L10(L12)X complex.

Forms part of the ribosomal stalk, playing a central role in the interaction of the ribosome with GTP-bound translation factors. This Chlamydia caviae (strain ATCC VR-813 / DSM 19441 / 03DC25 / GPIC) (Chlamydophila caviae) protein is Large ribosomal subunit protein uL10.